A 224-amino-acid polypeptide reads, in one-letter code: Protein GrpE (224 aa).

The interval 1–72 (MEKERDVAQE…KAKEEQNEEL (72 aa)) is disordered. The segment covering 10-19 (EQATYEQESP) has biased composition (polar residues). Residues 20-67 (NAERQEELKENEHQEKNAPEEQEKVREENGRQDAQKDEIGDPEKAKEE) are compositionally biased toward basic and acidic residues.

It belongs to the GrpE family. Homodimer.

The protein localises to the cytoplasm. Its function is as follows. Participates actively in the response to hyperosmotic and heat shock by preventing the aggregation of stress-denatured proteins, in association with DnaK and GrpE. It is the nucleotide exchange factor for DnaK and may function as a thermosensor. Unfolded proteins bind initially to DnaJ; upon interaction with the DnaJ-bound protein, DnaK hydrolyzes its bound ATP, resulting in the formation of a stable complex. GrpE releases ADP from DnaK; ATP binding to DnaK triggers the release of the substrate protein, thus completing the reaction cycle. Several rounds of ATP-dependent interactions between DnaJ, DnaK and GrpE are required for fully efficient folding. The polypeptide is Protein GrpE (Parageobacillus thermoglucosidasius (Geobacillus thermoglucosidasius)).